Here is a 68-residue protein sequence, read N- to C-terminus: Protein transport protein Sec61 subunit gamma (68 aa).

The residue at position 1 (Met-1) is an N-acetylmethionine. Topologically, residues 1 to 32 (MDQVMQFVEPSRQFVKDSIRLVKRCTKPDRKE) are cytoplasmic. Residue Ser-18 is modified to Phosphoserine. A helical transmembrane segment spans residues 33-61 (FQKIAMATAIGFAIMGFIGFFVKLIHIPI). The Extracellular segment spans residues 62–68 (NNIIVGG).

Belongs to the SecE/SEC61-gamma family. The SEC61 channel-forming translocon complex consists of channel-forming core components SEC61A1, SEC61B and SEC61G and different auxiliary components such as SEC62 and SEC63. The SEC61 channel associates with the multi-pass translocon (MPT) complex.

It localises to the endoplasmic reticulum membrane. Functionally, component of SEC61 channel-forming translocon complex that mediates transport of signal peptide-containing precursor polypeptides across the endoplasmic reticulum (ER). Forms a ribosome receptor and a gated pore in the ER membrane, both functions required for cotranslational translocation of nascent polypeptides. The SEC61 channel is also involved in ER membrane insertion of transmembrane proteins: it mediates membrane insertion of the first few transmembrane segments of proteins, while insertion of subsequent transmembrane regions of multi-pass membrane proteins is mediated by the multi-pass translocon (MPT) complex. The SEC61 channel cooperates with the translocating protein TRAM1 to import nascent proteins into the ER. This Bos taurus (Bovine) protein is Protein transport protein Sec61 subunit gamma (SEC61G).